A 193-amino-acid polypeptide reads, in one-letter code: Putative nitroreductase HBN1 (193 aa).

At Ser2 the chain carries N-acetylserine.

It belongs to the nitroreductase family. It depends on FMN as a cofactor.

The protein resides in the cytoplasm. Its subcellular location is the nucleus. The polypeptide is Putative nitroreductase HBN1 (HBN1) (Saccharomyces cerevisiae (strain ATCC 204508 / S288c) (Baker's yeast)).